The sequence spans 55 residues: MLFNNIQTFSFKNININNLNKIKKETENSNSNYSLNSINSNKIQTNLFTRPNWSI.

This is an uncharacterized protein from Dictyostelium discoideum (Social amoeba).